The following is a 353-amino-acid chain: Photosystem II protein D1 (353 aa).

Residue T2 is modified to N-acetylthreonine. T2 is modified (phosphothreonine). 3 helical membrane passes run 29 to 46 (YIGWFGVLMIPTLLTATS), 118 to 133 (HFLLGVACYMGREWEL), and 142 to 156 (WIAVAYSAPVAAATA). H118 lines the chlorophyll a pocket. A pheophytin a-binding site is contributed by Y126. The [CaMn4O5] cluster site is built by D170 and E189. The helical transmembrane segment at 197-218 (FHMLGVAGVFGGSLFSAMHGSL) threads the bilayer. Residue H198 participates in chlorophyll a binding. Residues H215 and 264–265 (SF) contribute to the a quinone site. H215 is a Fe cation binding site. Residue H272 participates in Fe cation binding. A helical transmembrane segment spans residues 274 to 288 (FLAAWPVVGIWFTAL). [CaMn4O5] cluster is bound by residues H332, E333, D342, and A344. The propeptide occupies 345–353 (AVEAPSING).

The protein belongs to the reaction center PufL/M/PsbA/D family. As to quaternary structure, PSII is composed of 1 copy each of membrane proteins PsbA, PsbB, PsbC, PsbD, PsbE, PsbF, PsbH, PsbI, PsbJ, PsbK, PsbL, PsbM, PsbT, PsbX, PsbY, PsbZ, Psb30/Ycf12, at least 3 peripheral proteins of the oxygen-evolving complex and a large number of cofactors. It forms dimeric complexes. The D1/D2 heterodimer binds P680, chlorophylls that are the primary electron donor of PSII, and subsequent electron acceptors. It shares a non-heme iron and each subunit binds pheophytin, quinone, additional chlorophylls, carotenoids and lipids. D1 provides most of the ligands for the Mn4-Ca-O5 cluster of the oxygen-evolving complex (OEC). There is also a Cl(-1) ion associated with D1 and D2, which is required for oxygen evolution. The PSII complex binds additional chlorophylls, carotenoids and specific lipids. is required as a cofactor. Post-translationally, tyr-161 forms a radical intermediate that is referred to as redox-active TyrZ, YZ or Y-Z. In terms of processing, C-terminally processed by CTPA; processing is essential to allow assembly of the oxygen-evolving complex and thus photosynthetic growth.

It is found in the plastid. The protein resides in the chloroplast thylakoid membrane. The catalysed reaction is 2 a plastoquinone + 4 hnu + 2 H2O = 2 a plastoquinol + O2. Its function is as follows. Photosystem II (PSII) is a light-driven water:plastoquinone oxidoreductase that uses light energy to abstract electrons from H(2)O, generating O(2) and a proton gradient subsequently used for ATP formation. It consists of a core antenna complex that captures photons, and an electron transfer chain that converts photonic excitation into a charge separation. The D1/D2 (PsbA/PsbD) reaction center heterodimer binds P680, the primary electron donor of PSII as well as several subsequent electron acceptors. This Chloranthus spicatus (Chulantree) protein is Photosystem II protein D1.